The chain runs to 240 residues: uncharacterized protein (240 aa).

Residues 216 to 240 are disordered; the sequence is MKQSKNKPRIRQAVGATRQCRKPQA.

This is an uncharacterized protein from Escherichia coli (strain K12).